Here is a 225-residue protein sequence, read N- to C-terminus: Octanoyltransferase (225 aa).

The region spanning 42 to 219 is the BPL/LPL catalytic domain; sequence KNRQASMIFC…SICSALEYIN (178 aa). Substrate is bound by residues 79-86, 149-151, and 162-164; these read RGGKITWH, AIG, and GFA. Residue Cys180 is the Acyl-thioester intermediate of the active site.

The protein belongs to the LipB family.

Its subcellular location is the cytoplasm. The catalysed reaction is octanoyl-[ACP] + L-lysyl-[protein] = N(6)-octanoyl-L-lysyl-[protein] + holo-[ACP] + H(+). It functions in the pathway protein modification; protein lipoylation via endogenous pathway; protein N(6)-(lipoyl)lysine from octanoyl-[acyl-carrier-protein]: step 1/2. Catalyzes the transfer of endogenously produced octanoic acid from octanoyl-acyl-carrier-protein onto the lipoyl domains of lipoate-dependent enzymes. Lipoyl-ACP can also act as a substrate although octanoyl-ACP is likely to be the physiological substrate. This Tropheryma whipplei (strain TW08/27) (Whipple's bacillus) protein is Octanoyltransferase.